A 925-amino-acid chain; its full sequence is MVLPTTKDATAAGAGFDTVRIIGDIDALAEKHAGHEDVFRSAVSRLLKAELAKVRDAAQAKLLRDRHGRHCAEWLCFVQDEIIRLSFSAATRHLYHSPIPSDGERMAVVATGGYGRGLMAPESDIDLLFILPYKQTAWGEQVAEAILYCLWDMGLNVGHATRSVNESIRQARRDMTVRTGILEARFLTGDRALYDELISRFDTEVVQGTAAEFVAAKLAEREERHHRAGQSRYLVEPNVKDGKGGLRDLHTLFWIAKYVYRVRESHELLRRNVFDVREYRTFRRCADFLWSVRCNLHFATGRAEERLSFDLQREIAVRLGYTSHPGMQDVERFMKHYFLTAKDVGDLTAILCAKLEDQQAKPAPVLSRAMSKPPGAEVRRVPDSDDFIIDNNRINLAAPDLFKRDPVNLIRLFRLAQKNNLAFHPDALRMVRRSRRLINAQLREDPESNRLFIEILTSNDAETVLRRMNETGVLGEFIRAFGKIVSMMQFNMYHHYTVDEHLIRCIGILQDIERGDNDEVALAGELMRTINPEHRPVIYIATLLHDVAKGRPEDHSIAGARVARRLCPRLGFNAADTELVAWLIEQHLTMSKVAQSRDLSDRKTIENFAAVVQSVERMKLLTILTTADIRGVGPGVWNGWKAQLLRTLYYETEPVLTGGFSEVNRAQRMAAAEAEFRAAFTEWSGHELNAYIARHYPAYWLKVDLEHKIRHARFLRASEQSGRKLNINVGFDEARGVTELTILAADHPWLLSIIAGACASAGANIVDAQIYTTTDGQALDTIAISREYERDEDEGRRAARIAEIIEQVLEGRLRLPDVMPSRAAGKRLRPFVVEPKVTINNQWSDRHTMIEVSGLDRPGLLFQLTTAISKLNLNIASAHVATFGERARDVFYVTDLLGARITAPTRQAAIKRALVHLLASGNTAE.

A uridylyltransferase region spans residues 1-382; it reads MVLPTTKDAT…PPGAEVRRVP (382 aa). The tract at residues 383-738 is uridylyl-removing; the sequence is DSDDFIIDNN…VGFDEARGVT (356 aa). The HD domain maps to 498 to 621; that stretch reads VDEHLIRCIG…VQSVERMKLL (124 aa). ACT domains follow at residues 739–820 and 849–925; these read ELTI…DVMP and MIEV…NTAE.

The protein belongs to the GlnD family. The cofactor is Mg(2+).

It catalyses the reaction [protein-PII]-L-tyrosine + UTP = [protein-PII]-uridylyl-L-tyrosine + diphosphate. It carries out the reaction [protein-PII]-uridylyl-L-tyrosine + H2O = [protein-PII]-L-tyrosine + UMP + H(+). Uridylyltransferase (UTase) activity is inhibited by glutamine, while glutamine activates uridylyl-removing (UR) activity. Modifies, by uridylylation and deuridylylation, the PII regulatory proteins (GlnB and homologs), in response to the nitrogen status of the cell that GlnD senses through the glutamine level. Under low glutamine levels, catalyzes the conversion of the PII proteins and UTP to PII-UMP and PPi, while under higher glutamine levels, GlnD hydrolyzes PII-UMP to PII and UMP (deuridylylation). Thus, controls uridylylation state and activity of the PII proteins, and plays an important role in the regulation of nitrogen assimilation and metabolism. This chain is Bifunctional uridylyltransferase/uridylyl-removing enzyme, found in Nitrobacter winogradskyi (strain ATCC 25391 / DSM 10237 / CIP 104748 / NCIMB 11846 / Nb-255).